A 95-amino-acid polypeptide reads, in one-letter code: Fluoride-specific ion channel FluC 1 (95 aa).

3 consecutive transmembrane segments (helical) span residues 23 to 43 (LIDAPLALLGINLLGSFLMGW), 49 to 69 (LWGTGFLGGFTSFSAFALLMF), and 70 to 90 (DGAYLYAAVTVIGCVAAWLLG). The Na(+) site is built by Gly-56 and Thr-59.

Belongs to the fluoride channel Fluc/FEX (TC 1.A.43) family.

The protein localises to the cell membrane. It catalyses the reaction fluoride(in) = fluoride(out). Na(+) is not transported, but it plays an essential structural role and its presence is essential for fluoride channel function. Fluoride-specific ion channel. Important for reducing fluoride concentration in the cell, thus reducing its toxicity. This chain is Fluoride-specific ion channel FluC 1, found in Corynebacterium diphtheriae (strain ATCC 700971 / NCTC 13129 / Biotype gravis).